A 285-amino-acid chain; its full sequence is uncharacterized protein (285 aa).

Transmembrane regions (helical) follow at residues 6-26 (YLVVILTVAGVLVILGFTPLI), 38-58 (VFAAILFLYVFFGRQIIYIFP), 84-104 (IFLLDLCPFFALIGPIFIFLR), 110-130 (GVLAIFGFYGAAITLFGELIF), 153-173 (FMMHFLSFLLSLAVFLWDDGF), 176-196 (ISFFYIHVFALAYLSYVALMV), and 236-256 (LIFGVSFGLSYFAIVLLTVLV).

Its subcellular location is the cell membrane. This is an uncharacterized protein from Mycoplasma pneumoniae (strain ATCC 29342 / M129 / Subtype 1) (Mycoplasmoides pneumoniae).